The following is a 336-amino-acid chain: Serpentine receptor class beta-15 (336 aa).

7 consecutive transmembrane segments (helical) span residues 24-44 (LFIH…FVIF), 57-77 (FLFS…AIIS), 109-129 (IFMS…FIAM), 142-162 (LGPI…FFIY), 186-206 (FTFF…NSYL), 237-257 (VFVV…IMIL), and 276-296 (GAFT…AVYL).

It belongs to the nematode receptor-like protein srb family.

It is found in the membrane. This Caenorhabditis elegans protein is Serpentine receptor class beta-15 (srb-15).